We begin with the raw amino-acid sequence, 56 residues long: UPF0391 membrane protein HCH_04387 (56 aa).

2 consecutive transmembrane segments (helical) span residues 6 to 26 (IVFFVVALVAGVLGFTGIAAA) and 30 to 50 (IAQILFVIFLVLFVISIIAGG).

It belongs to the UPF0391 family.

The protein localises to the cell membrane. The chain is UPF0391 membrane protein HCH_04387 from Hahella chejuensis (strain KCTC 2396).